The sequence spans 182 residues: Dynactin subunit 5 (182 aa).

Met-1 carries the N-acetylmethionine modification.

Belongs to the dynactin subunits 5/6 family. Dynactin subunit 5 subfamily. As to quaternary structure, subunit of dynactin, a multiprotein complex part of a tripartite complex with dynein and a adapter, such as BICDL1, BICD2 or HOOK3. The dynactin complex is built around ACTR1A/ACTB filament and consists of an actin-related filament composed of a shoulder domain, a pointed end and a barbed end. Its length is defined by its flexible shoulder domain. The soulder is composed of 2 DCTN1 subunits, 4 DCTN2 and 2 DCTN3. The 4 DCNT2 (via N-terminus) bind the ACTR1A filament and act as molecular rulers to determine the length. The pointed end is important for binding dynein-dynactin cargo adapters. Consists of 4 subunits: ACTR10, DCNT4, DCTN5 and DCTN6. Within the complex DCTN6 forms a heterodimer with DCTN5. The barbed end is composed of a CAPZA1:CAPZB heterodimers, which binds ACTR1A/ACTB filament and dynactin and stabilizes dynactin. Interacts with N4BP2L1.

It localises to the cytoplasm. The protein localises to the cytoskeleton. Its subcellular location is the chromosome. The protein resides in the centromere. It is found in the kinetochore. Part of the dynactin complex that activates the molecular motor dynein for ultra-processive transport along microtubules. The protein is Dynactin subunit 5 (DCTN5) of Pongo abelii (Sumatran orangutan).